The chain runs to 576 residues: DM7 family protein GD16138 (576 aa).

The tract at residues phenylalanine 454–lysine 481 is disordered. A compositionally biased stretch (acidic residues) spans leucine 457–glutamate 478.

This sequence belongs to the DM7 family.

The chain is DM7 family protein GD16138 from Drosophila simulans (Fruit fly).